The primary structure comprises 215 residues: Heart- and neural crest derivatives-expressed protein 1 (215 aa).

Disordered regions lie at residues 53–109 (APDF…RTES) and 166–198 (LKKA…EKRI). Residues 65–89 (AAAAATAYGPDARPGQSPGRLEALG) are compositionally biased toward low complexity. Over residues 92 to 104 (LGRRKGSGPKKER) the composition is skewed to basic residues. The bHLH domain occupies 94 to 146 (RRKGSGPKKERRRTESINSAFAELRECIPNVPADTKLSKIKTLRLATSYIAYL). A Phosphothreonine; by PLK4 modification is found at Thr107. A Phosphoserine; by PLK4 modification is found at Ser109.

As to quaternary structure, efficient DNA binding requires dimerization with another bHLH protein. Forms homodimers and heterodimers with TCF3 gene products E12 and E47, HAND2 and HEY1, HEY2 and HEYL (hairy-related transcription factors). Interacts with MDFIC. Interacts with SOX15; the interaction enhances HAND1-induced differentiation of trophoblast giant cells. Post-translationally, phosphorylation by PLK4 disrupts the interaction with MDFIC and leads to translocation into the nucleoplasm, allowing dimerization and transcription factor activity. In terms of tissue distribution, heart.

The protein localises to the nucleus. The protein resides in the nucleoplasm. It is found in the nucleolus. Functionally, transcription factor that plays an essential role in both trophoblast giant cell differentiation and in cardiac morphogenesis. Binds the DNA sequence 5'-NRTCTG-3' (non-canonical E-box). Acts as a transcriptional repressor of SOX15. In the adult, could be required for ongoing expression of cardiac-specific genes. The chain is Heart- and neural crest derivatives-expressed protein 1 (HAND1) from Homo sapiens (Human).